A 147-amino-acid polypeptide reads, in one-letter code: Ribonuclease pancreatic gamma-type (147 aa).

An N-terminal signal peptide occupies residues 1–25; that stretch reads MGLEKSFLLFSLLVLVLGWVQPSLG. K35 and R38 together coordinate substrate. The active-site Proton acceptor is the H40. 4 disulfide bridges follow: C54–C112, C68–C123, C86–C138, and C93–C100. Substrate contacts are provided by residues 69 to 73, K94, and R113; that span reads KPMNT. H142 serves as the catalytic Proton donor.

Belongs to the pancreatic ribonuclease family. In terms of assembly, monomer.

It is found in the secreted. It carries out the reaction an [RNA] containing cytidine + H2O = an [RNA]-3'-cytidine-3'-phosphate + a 5'-hydroxy-ribonucleotide-3'-[RNA].. The enzyme catalyses an [RNA] containing uridine + H2O = an [RNA]-3'-uridine-3'-phosphate + a 5'-hydroxy-ribonucleotide-3'-[RNA].. Endonuclease that catalyzes the cleavage of RNA on the 3' side of pyrimidine nucleotides. Acts on single-stranded and double-stranded RNA. This Rattus rattus (Black rat) protein is Ribonuclease pancreatic gamma-type.